Reading from the N-terminus, the 146-residue chain is UPF0735 ACT domain-containing protein CHY_1913 (146 aa).

In terms of domain architecture, ACT spans 70–145 (TLALNLEHRA…GVSKVELVGQ (76 aa)).

Belongs to the UPF0735 family.

The protein is UPF0735 ACT domain-containing protein CHY_1913 of Carboxydothermus hydrogenoformans (strain ATCC BAA-161 / DSM 6008 / Z-2901).